A 542-amino-acid polypeptide reads, in one-letter code: Katanin p60 ATPase-containing subunit A-like 2 (542 aa).

Residues 25-57 (RRKNLLILIMHYLLQEGYMDSANSLEQETKISL) enclose the LisH domain. Disordered stretches follow at residues 94–126 (LDHD…RIAQ) and 142–168 (HAHQ…ASEI). Positions 114–126 (GSNSTQGLPRIAQ) are enriched in polar residues. Position 298–305 (298–305 (GPPGTGKT)) interacts with ATP.

Belongs to the AAA ATPase family. Katanin p60 subunit A1 subfamily. A-like 2 sub-subfamily.

It localises to the cytoplasm. The protein resides in the cytoskeleton. It is found in the spindle. Its subcellular location is the spindle pole. It carries out the reaction n ATP + n H2O + a microtubule = n ADP + n phosphate + (n+1) alpha/beta tubulin heterodimers.. In terms of biological role, severs microtubules in vitro in an ATP-dependent manner. This activity may promote rapid reorganization of cellular microtubule arrays. The sequence is that of Katanin p60 ATPase-containing subunit A-like 2 (katnal2) from Xenopus tropicalis (Western clawed frog).